A 150-amino-acid polypeptide reads, in one-letter code: Transcriptional repressor NrdR (150 aa).

A zinc finger spans residues C3–C33. One can recognise an ATP-cone domain in the interval L48–E138.

The protein belongs to the NrdR family. The cofactor is Zn(2+).

In terms of biological role, negatively regulates transcription of bacterial ribonucleotide reductase nrd genes and operons by binding to NrdR-boxes. This chain is Transcriptional repressor NrdR, found in Symbiobacterium thermophilum (strain DSM 24528 / JCM 14929 / IAM 14863 / T).